The following is a 508-amino-acid chain: Lysine--tRNA ligase (508 aa).

The Mg(2+) site is built by Glu-418 and Glu-425.

Belongs to the class-II aminoacyl-tRNA synthetase family. Homodimer. It depends on Mg(2+) as a cofactor.

The protein localises to the cytoplasm. It catalyses the reaction tRNA(Lys) + L-lysine + ATP = L-lysyl-tRNA(Lys) + AMP + diphosphate. The chain is Lysine--tRNA ligase from Burkholderia thailandensis (strain ATCC 700388 / DSM 13276 / CCUG 48851 / CIP 106301 / E264).